We begin with the raw amino-acid sequence, 348 residues long: L-asparaginase 2 (348 aa).

Residues methionine 1–alanine 22 form the signal peptide. The Asparaginase/glutaminase domain occupies proline 24–tyrosine 348. Catalysis depends on threonine 34, which acts as the O-isoaspartyl threonine intermediate. Residues serine 80–glutamine 81 and threonine 111–aspartate 112 contribute to the substrate site. The cysteines at positions 99 and 127 are disulfide-linked.

The protein belongs to the asparaginase 1 family. As to quaternary structure, homotetramer.

The protein resides in the periplasm. It carries out the reaction L-asparagine + H2O = L-aspartate + NH4(+). This is L-asparaginase 2 (ansB) from Escherichia coli (strain K12).